We begin with the raw amino-acid sequence, 182 residues long: UPF0148 protein VNG_2366C (182 aa).

The segment at Met1 to Thr162 is disordered. Composition is skewed to basic and acidic residues over residues Gly7–Arg33 and Asp47–Glu62. Residues Pro105–Ala122 show a composition bias toward low complexity. A compositionally biased stretch (basic and acidic residues) spans Arg153–Thr162.

It belongs to the UPF0148 family.

This chain is UPF0148 protein VNG_2366C, found in Halobacterium salinarum (strain ATCC 700922 / JCM 11081 / NRC-1) (Halobacterium halobium).